The chain runs to 227 residues: Probable septum site-determining protein MinC (227 aa).

This sequence belongs to the MinC family. In terms of assembly, interacts with MinD and FtsZ.

In terms of biological role, cell division inhibitor that blocks the formation of polar Z ring septums. Rapidly oscillates between the poles of the cell to destabilize FtsZ filaments that have formed before they mature into polar Z rings. Prevents FtsZ polymerization. The chain is Probable septum site-determining protein MinC from Geobacillus thermodenitrificans (strain NG80-2).